We begin with the raw amino-acid sequence, 84 residues long: Toxin Cll9 (84 aa).

The first 19 residues, 1-19 (MNSLLMITACLILIGTVWA), serve as a signal peptide directing secretion. An LCN-type CS-alpha/beta domain is found at 20–83 (EDGYLFDKRK…ISRTPGKTCK (64 aa)). 4 disulfides stabilise this stretch: cysteine 31–cysteine 82, cysteine 35–cysteine 58, cysteine 44–cysteine 63, and cysteine 48–cysteine 65.

As to expression, expressed by the venom gland.

It localises to the secreted. Beta toxins bind voltage-independently at site-4 of sodium channels (Nav) and shift the voltage of activation toward more negative potentials thereby affecting sodium channel activation and promoting spontaneous and repetitive firing. Has some action on peripheral ganglia, but not on other sodium channels such as those from cerebellum granular cells in culture. Induces sleep, suggesting a strong antiepileptic action. The chain is Toxin Cll9 from Centruroides limpidus (Mexican scorpion).